Here is a 340-residue protein sequence, read N- to C-terminus: Protein-arginine kinase (340 aa).

Residues 21–242 (VVLSSRIRLA…EQIIMQERVA (222 aa)) form the Phosphagen kinase C-terminal domain. ATP-binding positions include 24-28 (SSRIR), His79, Arg113, 164-168 (RASVM), and 195-200 (RGIYGE).

The protein belongs to the ATP:guanido phosphotransferase family.

The enzyme catalyses L-arginyl-[protein] + ATP = N(omega)-phospho-L-arginyl-[protein] + ADP + H(+). Its function is as follows. Catalyzes the specific phosphorylation of arginine residues in proteins. This chain is Protein-arginine kinase, found in Listeria monocytogenes serotype 4b (strain CLIP80459).